A 318-amino-acid polypeptide reads, in one-letter code: Protein-methionine-sulfoxide reductase catalytic subunit MsrP (318 aa).

A signal peptide (tat-type signal) is located at residues 1–40 (MNRFTRYDVTPEAIFNQRRQIIKAMGLGAAALSLPNIGFA). Residues Asn-72, 75–76 (YE), Cys-130, Thr-165, Asn-217, Arg-222, and 233–235 (SIK) contribute to the Mo-molybdopterin site.

The protein belongs to the MsrP family. Heterodimer of a catalytic subunit (MsrP) and a heme-binding subunit (MsrQ). Requires Mo-molybdopterin as cofactor. Post-translationally, predicted to be exported by the Tat system. The position of the signal peptide cleavage has not been experimentally proven.

The protein localises to the periplasm. The enzyme catalyses L-methionyl-[protein] + a quinone + H2O = L-methionyl-(S)-S-oxide-[protein] + a quinol. The catalysed reaction is L-methionyl-[protein] + a quinone + H2O = L-methionyl-(R)-S-oxide-[protein] + a quinol. Part of the MsrPQ system that repairs oxidized periplasmic proteins containing methionine sulfoxide residues (Met-O), using respiratory chain electrons. Thus protects these proteins from oxidative-stress damage caused by reactive species of oxygen and chlorine generated by the host defense mechanisms. MsrPQ is essential for the maintenance of envelope integrity under bleach stress, rescuing a wide series of structurally unrelated periplasmic proteins from methionine oxidation. The catalytic subunit MsrP is non-stereospecific, being able to reduce both (R-) and (S-) diastereoisomers of methionine sulfoxide. In Actinobacillus pleuropneumoniae serotype 5b (strain L20), this protein is Protein-methionine-sulfoxide reductase catalytic subunit MsrP.